Reading from the N-terminus, the 160-residue chain is Crossover junction endodeoxyribonuclease RuvC (160 aa).

Residues Asp9, Glu68, and Asp141 contribute to the active site. Residues Asp9, Glu68, and Asp141 each coordinate Mg(2+).

It belongs to the RuvC family. As to quaternary structure, homodimer which binds Holliday junction (HJ) DNA. The HJ becomes 2-fold symmetrical on binding to RuvC with unstacked arms; it has a different conformation from HJ DNA in complex with RuvA. In the full resolvosome a probable DNA-RuvA(4)-RuvB(12)-RuvC(2) complex forms which resolves the HJ. The cofactor is Mg(2+).

The protein resides in the cytoplasm. The enzyme catalyses Endonucleolytic cleavage at a junction such as a reciprocal single-stranded crossover between two homologous DNA duplexes (Holliday junction).. In terms of biological role, the RuvA-RuvB-RuvC complex processes Holliday junction (HJ) DNA during genetic recombination and DNA repair. Endonuclease that resolves HJ intermediates. Cleaves cruciform DNA by making single-stranded nicks across the HJ at symmetrical positions within the homologous arms, yielding a 5'-phosphate and a 3'-hydroxyl group; requires a central core of homology in the junction. The consensus cleavage sequence is 5'-(A/T)TT(C/G)-3'. Cleavage occurs on the 3'-side of the TT dinucleotide at the point of strand exchange. HJ branch migration catalyzed by RuvA-RuvB allows RuvC to scan DNA until it finds its consensus sequence, where it cleaves and resolves the cruciform DNA. This is Crossover junction endodeoxyribonuclease RuvC from Campylobacter jejuni (strain RM1221).